We begin with the raw amino-acid sequence, 98 residues long: MMCGAPSATQPATAEIQAIADKVKSQLEEKENKTFPVFKAVEFKSQVVAGRNLFIKVQVDDDDFVHLRVFESLPHENKPLTLSSYQTNKSRHDELTYF.

Methionine 1 carries the N-acetylmethionine modification. A Secondary area of contact motif is present at residues 46-50 (QVVAG).

Belongs to the cystatin family.

It localises to the cytoplasm. Functionally, this is an intracellular thiol proteinase inhibitor. This chain is Cystatin-B (CSTB), found in Sus scrofa (Pig).